A 1059-amino-acid polypeptide reads, in one-letter code: Dihydropyrimidine dehydrogenase [NADP(+)] (1059 aa).

One can recognise a 4Fe-4S ferredoxin-type 1 domain in the interval 84–118 (ERGALKEAMRCLKCADAPCQKSCPTQLDVKSFITS). C94, C97, C102, C106, C145, C151, C155, and Q171 together coordinate [4Fe-4S] cluster. FAD contacts are provided by residues 207 to 211 (GCGPA), 231 to 239 (EKRAYIGGL), R248, and L274. Residues 354 to 357 (AGDT), 378 to 379 (RK), R385, 451 to 453 (AFG), and 495 to 501 (DVAGVAE) each bind NADP(+). 494-503 (GDVAGVAETT) serves as a coordination point for FAD. FMN is bound by residues S564 and 588–589 (KT). Residues N623 and 682–684 (NLS) each bind substrate. C685 (proton acceptor) is an active-site residue. K723 lines the FMN pocket. Position 750-751 (750-751 (NT)) interacts with substrate. Residues G781, 807-809 (TGG), and 830-831 (CS) contribute to the FMN site. 4Fe-4S ferredoxin-type domains follow at residues 955–987 (KVAI…FDPV) and 989–1019 (HQPH…MVPR). Positions 964, 967, 970, 974, 998, 1001, 1004, and 1008 each coordinate [4Fe-4S] cluster.

It belongs to the dihydropyrimidine dehydrogenase family. The cofactor is [4Fe-4S] cluster. FAD is required as a cofactor. It depends on FMN as a cofactor.

The enzyme catalyses 5,6-dihydrouracil + NADP(+) = uracil + NADPH + H(+). Its pathway is amino-acid biosynthesis; beta-alanine biosynthesis. Involved in pyrimidine base degradation. Catalyzes the reduction of uracil and thymine. Involved in the degradation of the chemotherapeutic drug 5-fluorouracil. The polypeptide is Dihydropyrimidine dehydrogenase [NADP(+)] (dpyd-1) (Caenorhabditis elegans).